We begin with the raw amino-acid sequence, 469 residues long: Signal recognition particle 54 kDa protein (469 aa).

Residues 104–111 (GLYGSGKT), 184–188 (DTAGR), and 242–245 (TKLD) contribute to the GTP site. Disordered regions lie at residues 388-410 (ELEN…SGKP) and 447-469 (QQGG…PFGD). Positions 448–469 (QGGGGGGGMGGMGGGGMGPFGD) are enriched in gly residues.

The protein belongs to the GTP-binding SRP family. SRP54 subfamily. In terms of assembly, part of the signal recognition particle protein translocation system, which is composed of SRP and FtsY. Archaeal SRP consists of a 7S RNA molecule of 300 nucleotides and two protein subunits: SRP54 and SRP19.

The protein resides in the cytoplasm. It catalyses the reaction GTP + H2O = GDP + phosphate + H(+). Its function is as follows. Involved in targeting and insertion of nascent membrane proteins into the cytoplasmic membrane. Binds to the hydrophobic signal sequence of the ribosome-nascent chain (RNC) as it emerges from the ribosomes. The SRP-RNC complex is then targeted to the cytoplasmic membrane where it interacts with the SRP receptor FtsY. This is Signal recognition particle 54 kDa protein from Haloarcula marismortui (strain ATCC 43049 / DSM 3752 / JCM 8966 / VKM B-1809) (Halobacterium marismortui).